Reading from the N-terminus, the 105-residue chain is UPF0235 protein Mchl_2407 (105 aa).

Belongs to the UPF0235 family.

This chain is UPF0235 protein Mchl_2407, found in Methylorubrum extorquens (strain CM4 / NCIMB 13688) (Methylobacterium extorquens).